The sequence spans 156 residues: Small ribosomal subunit protein uS7 (156 aa).

It belongs to the universal ribosomal protein uS7 family. As to quaternary structure, part of the 30S ribosomal subunit. Contacts proteins S9 and S11.

One of the primary rRNA binding proteins, it binds directly to 16S rRNA where it nucleates assembly of the head domain of the 30S subunit. Is located at the subunit interface close to the decoding center, probably blocks exit of the E-site tRNA. The sequence is that of Small ribosomal subunit protein uS7 from Mycobacterium ulcerans (strain Agy99).